The chain runs to 427 residues: Dihydroorotase (427 aa).

2 residues coordinate Zn(2+): histidine 60 and histidine 62. Substrate-binding positions include 62 to 64 and asparagine 94; that span reads HLR. The Zn(2+) site is built by aspartate 152, histidine 179, and histidine 232. Asparagine 278 contributes to the substrate binding site. Aspartate 305 serves as a coordination point for Zn(2+). Residue aspartate 305 is part of the active site. Substrate is bound by residues histidine 309 and 323 to 324; that span reads FG.

The protein belongs to the metallo-dependent hydrolases superfamily. DHOase family. Class I DHOase subfamily. It depends on Zn(2+) as a cofactor.

The enzyme catalyses (S)-dihydroorotate + H2O = N-carbamoyl-L-aspartate + H(+). Its pathway is pyrimidine metabolism; UMP biosynthesis via de novo pathway; (S)-dihydroorotate from bicarbonate: step 3/3. In terms of biological role, catalyzes the reversible cyclization of carbamoyl aspartate to dihydroorotate. This is Dihydroorotase from Geobacillus sp. (strain WCH70).